The following is a 641-amino-acid chain: Epsin-2 (641 aa).

A 1,2-diacyl-sn-glycero-3-phospho-(1D-myo-inositol-4,5-bisphosphate) is bound by residues arginine 8, lysine 11, arginine 25, asparagine 30, arginine 63, and histidine 73. The ENTH domain maps to 12 to 144; it reads NIVNNYSEAE…KDEERLKAER (133 aa). Arginine 153 and glutamine 156 each carry phosphoserine. The segment covering 163-181 has biased composition (polar residues); sequence SNQITFGRGSSQPNLSTSH. 2 disordered regions span residues 163 to 214 and 255 to 275; these read SNQI…GAPL and RATS…TSGE. Arginine 170 is modified (omega-N-methylarginine). Serine 173, serine 192, and serine 195 each carry phosphoserine. Over residues 259 to 273 the composition is skewed to polar residues; that stretch reads PRVSSELEQARPQTS. UIM domains lie at 275–294 and 300–319; these read EEEL…AEQE and GDDL…TVKI. Residues 340-425 form a disordered region; it reads ALPSSGPAAQ…QPASSAGKRA (86 aa). Tandem repeats lie at residues 352-354, 364-366, 377-379, 391-393, 409-411, and 427-429. The interval 352–639 is 6 X 3 AA repeats of [DE]-P-W; sequence EPWGPSASTN…AQATGTTNPF (288 aa). A compositionally biased stretch (low complexity) spans 408 to 421; the sequence is SDPWAASQQPASSA. The segment at 470-512 is disordered; sequence TAESVTSLPSQNNGTTSPDPFESQPLTVASSKPSSARKTPESF. Residues 472 to 506 show a composition bias toward polar residues; sequence ESVTSLPSQNNGTTSPDPFESQPLTVASSKPSSAR. A Phosphoserine modification is found at serine 486. Threonine 508 carries the post-translational modification Phosphothreonine. Tandem repeats lie at residues 537-539 and 552-554. The 3 X 3 AA repeats of N-P-F stretch occupies residues 537 to 639; sequence NPFLAPGAPA…AQATGTTNPF (103 aa). The residue at position 570 (serine 570) is a Phosphoserine. Repeat unit 3 spans residues 637 to 639; that stretch reads NPF.

It belongs to the epsin family. As to quaternary structure, binds EPS15. Interacts with ITSN1. Binds AP-2 and clathrin. Interacts with UBQLN2. Post-translationally, ubiquitinated. As to expression, highest expression is found in brain. Detected at lower levels in lung and liver.

It localises to the cytoplasm. Its subcellular location is the cytoplasmic vesicle. It is found in the clathrin-coated vesicle. Plays a role in the formation of clathrin-coated invaginations and endocytosis. The polypeptide is Epsin-2 (EPN2) (Homo sapiens (Human)).